A 364-amino-acid polypeptide reads, in one-letter code: UDP-N-acetylglucosamine--N-acetylmuramyl-(pentapeptide) pyrophosphoryl-undecaprenol N-acetylglucosamine transferase (364 aa).

UDP-N-acetyl-alpha-D-glucosamine-binding positions include 19–21 (TGG), Asn-131, Arg-167, Ser-195, Ile-250, and Gln-295.

The protein belongs to the glycosyltransferase 28 family. MurG subfamily.

The protein resides in the cell inner membrane. The catalysed reaction is di-trans,octa-cis-undecaprenyl diphospho-N-acetyl-alpha-D-muramoyl-L-alanyl-D-glutamyl-meso-2,6-diaminopimeloyl-D-alanyl-D-alanine + UDP-N-acetyl-alpha-D-glucosamine = di-trans,octa-cis-undecaprenyl diphospho-[N-acetyl-alpha-D-glucosaminyl-(1-&gt;4)]-N-acetyl-alpha-D-muramoyl-L-alanyl-D-glutamyl-meso-2,6-diaminopimeloyl-D-alanyl-D-alanine + UDP + H(+). It functions in the pathway cell wall biogenesis; peptidoglycan biosynthesis. Cell wall formation. Catalyzes the transfer of a GlcNAc subunit on undecaprenyl-pyrophosphoryl-MurNAc-pentapeptide (lipid intermediate I) to form undecaprenyl-pyrophosphoryl-MurNAc-(pentapeptide)GlcNAc (lipid intermediate II). The protein is UDP-N-acetylglucosamine--N-acetylmuramyl-(pentapeptide) pyrophosphoryl-undecaprenol N-acetylglucosamine transferase of Xylella fastidiosa (strain Temecula1 / ATCC 700964).